Reading from the N-terminus, the 84-residue chain is U8-theraphotoxin-Hhn1b (84 aa).

Positions 1-21 (MKVVLIVCLVWVMAMMELVSC) are cleaved as a signal peptide. Disulfide bonds link cysteine 23–cysteine 35, cysteine 29–cysteine 44, cysteine 34–cysteine 67, and cysteine 54–cysteine 75.

This sequence belongs to the AVIT (prokineticin) family. Expressed by the venom gland.

Its subcellular location is the secreted. The protein is U8-theraphotoxin-Hhn1b of Cyriopagopus hainanus (Chinese bird spider).